Consider the following 519-residue polypeptide: Bifunctional NAD(P)H-hydrate repair enzyme Nnr (519 aa).

The interval 1-233 (MMRCGEGYPG…DIGIPPAAEI (233 aa)) is NAD(P)H-hydrate epimerase. The YjeF N-terminal domain occupies 25-233 (MAAADINAEY…DIGIPPAAEI (209 aa)). The tract at residues 71–75 (GNGGD) is NADPHX 1; for epimerase activity. K(+) is bound by residues N72 and D144. Residues 148–154 (GTGVRGS) are NADPHX 1; for epimerase activity. D177 serves as a coordination point for (6S)-NADPHX. S180 lines the K(+) pocket. Residues 235 to 515 (MGPGDLLRIP…DMIPSVMDPG (281 aa)) form the YjeF C-terminal domain. Residues 235 to 519 (MGPGDLLRIP…SVMDPGFYGF (285 aa)) are ADP-dependent (S)-NAD(P)H-hydrate dehydratase. Position 338 (G338) interacts with (6S)-NADPHX. The segment at 389 to 395 (HMAEFSS) is NADPHX 2; for dehydratase activity. ADP is bound by residues 428-432 (KGRID) and 447-456 (CPGMTVGGTG). A (6S)-NADPHX-binding site is contributed by D457.

The protein in the N-terminal section; belongs to the NnrE/AIBP family. This sequence in the C-terminal section; belongs to the NnrD/CARKD family. Requires K(+) as cofactor.

It catalyses the reaction (6S)-NADHX + ADP = AMP + phosphate + NADH + H(+). The enzyme catalyses (6S)-NADPHX + ADP = AMP + phosphate + NADPH + H(+). The catalysed reaction is (6R)-NADHX = (6S)-NADHX. It carries out the reaction (6R)-NADPHX = (6S)-NADPHX. Its function is as follows. Bifunctional enzyme that catalyzes the epimerization of the S- and R-forms of NAD(P)HX and the dehydration of the S-form of NAD(P)HX at the expense of ADP, which is converted to AMP. This allows the repair of both epimers of NAD(P)HX, a damaged form of NAD(P)H that is a result of enzymatic or heat-dependent hydration. The protein is Bifunctional NAD(P)H-hydrate repair enzyme Nnr (nnr) of Methanothermobacter thermautotrophicus (strain ATCC 29096 / DSM 1053 / JCM 10044 / NBRC 100330 / Delta H) (Methanobacterium thermoautotrophicum).